A 180-amino-acid chain; its full sequence is MKLDKYTVGKRYGKALFELAVEKNQAEAIYQELLTLREVYHQVPGIGDILSDDRLEPYEKDSIMEKLVTGFSEMMQNFLRVVYEYRRMYDLLLMIDEYERRYDEHQGLILGSVTTAIPLSKEQHQAMEEKAAQLLGYEQAHLVNLIDPSIVGGVVIEANHQVIDGSIRKQLEHMQQKLLK.

This sequence belongs to the ATPase delta chain family. In terms of assembly, F-type ATPases have 2 components, F(1) - the catalytic core - and F(0) - the membrane proton channel. F(1) has five subunits: alpha(3), beta(3), gamma(1), delta(1), epsilon(1). F(0) has three main subunits: a(1), b(2) and c(10-14). The alpha and beta chains form an alternating ring which encloses part of the gamma chain. F(1) is attached to F(0) by a central stalk formed by the gamma and epsilon chains, while a peripheral stalk is formed by the delta and b chains.

The protein resides in the cell membrane. Its function is as follows. F(1)F(0) ATP synthase produces ATP from ADP in the presence of a proton or sodium gradient. F-type ATPases consist of two structural domains, F(1) containing the extramembraneous catalytic core and F(0) containing the membrane proton channel, linked together by a central stalk and a peripheral stalk. During catalysis, ATP synthesis in the catalytic domain of F(1) is coupled via a rotary mechanism of the central stalk subunits to proton translocation. This protein is part of the stalk that links CF(0) to CF(1). It either transmits conformational changes from CF(0) to CF(1) or is implicated in proton conduction. This is ATP synthase subunit delta from Enterococcus faecalis (strain ATCC 700802 / V583).